A 621-amino-acid polypeptide reads, in one-letter code: Microbial serine proteinase (621 aa).

A signal peptide spans 1-24 (MRKTSLALAISALLSALPIASVQA). Residues 68–440 (PRGGMAGNDL…FGLVDVNKTQ (373 aa)) form the Peptidase S8 domain. The active-site Charge relay system is the Asp98. The disordered stretch occupies residues 114 to 133 (PGSKNVVTGGSDPTPTDPDR). Catalysis depends on charge relay system residues His137 and Ser354. A P/Homo B domain is found at 454-619 (AVALAKGKGN…GYSVLGHDAA (166 aa)). The disordered stretch occupies residues 457–485 (LAKGKGNGRSPSAPSRYVGSSPTRSSTQV). The span at 465-485 (RSPSAPSRYVGSSPTRSSTQV) shows a compositional bias: polar residues.

The protein belongs to the peptidase S8 family.

In terms of biological role, agent of furonculosis. The sequence is that of Microbial serine proteinase (aspA) from Aeromonas salmonicida.